The following is a 268-amino-acid chain: Embryonic abundant protein USP92 (268 aa).

The first 22 residues, 1–22 (MEFAHLTVLSLFCLAFVGITAT), serve as a signal peptide directing secretion. A run of 5 repeats spans residues 50 to 55 (GKTNSL), 83 to 88 (GNTNSV), 101 to 106 (GVTDSI), 166 to 183 (YVVEDVKKVGDNAVMCHR), and 202 to 222 (YVVSLVASDGTKTKALTVCHH). The interval 50–106 (GKTNSLPIKSEELKQYSTLFFEHDLHPRKNFILGNTNSVGSIIRPFTKSRQGVTDSI) is 3 X 6 AA approximate repeats. The BURP domain maps to 68-259 (LFFEHDLHPR…GNKAAAWVPN (192 aa)). The 2 X approximate repeats stretch occupies residues 166–222 (YVVEDVKKVGDNAVMCHRLNFEKVVFNCHQVRETTAYVVSLVASDGTKTKALTVCHH). Asn259 carries an N-linked (GlcNAc...) asparagine glycan.

Seed.

The chain is Embryonic abundant protein USP92 from Vicia faba (Broad bean).